The primary structure comprises 365 residues: UDP-galactose transporter homolog 1 (365 aa).

2 consecutive transmembrane segments (helical) span residues 42–62 (IIDLIICVSGIYASFLTWAVL) and 80–100 (ASLVINTVQSFLAAAVGYAYL). Asparagine 115 carries an N-linked (GlcNAc...) asparagine glycan. The next 2 membrane-spanning stretches (helical) occupy residues 182-202 (YAVVVLVTIGVSMFTIFHAAP) and 206-226 (SGAGSEHQLYGLGLLGISMLL). An N-linked (GlcNAc...) asparagine glycan is attached at asparagine 231. 4 consecutive transmembrane segments (helical) span residues 249-269 (VMCGLNLLTGVFTTVSLLTFS), 289-309 (DIVLFGLCGAVGQVFIFQTLE), 315-335 (VLVTVNVTRKMFSMLLSVVWF), and 339-359 (LTLGQWAGVAAVFGGIGFEAW).

Belongs to the nucleotide-sugar transporter family. SLC35B subfamily.

The protein resides in the endoplasmic reticulum membrane. Its function is as follows. May be involved in specific transport of UDP-Gal from the cytosol to the Golgi lumen. Involved in the maintenance of optimal conditions for the folding of secretory pathway proteins in the endoplasmic reticulum. This is UDP-galactose transporter homolog 1 (HUT1) from Yarrowia lipolytica (strain CLIB 122 / E 150) (Yeast).